The following is a 466-amino-acid chain: Glutamate--tRNA ligase 2 (466 aa).

The 'HIGH' region motif lies at 11 to 21 (PSPTGFLHIGG). A 'KMSKS' region motif is present at residues 239 to 243 (KLSKR). Lys-242 serves as a coordination point for ATP.

The protein belongs to the class-I aminoacyl-tRNA synthetase family. Glutamate--tRNA ligase type 1 subfamily. As to quaternary structure, monomer.

The protein resides in the cytoplasm. It carries out the reaction tRNA(Glu) + L-glutamate + ATP = L-glutamyl-tRNA(Glu) + AMP + diphosphate. Its function is as follows. Catalyzes the attachment of glutamate to tRNA(Glu) in a two-step reaction: glutamate is first activated by ATP to form Glu-AMP and then transferred to the acceptor end of tRNA(Glu). This is Glutamate--tRNA ligase 2 from Roseobacter denitrificans (strain ATCC 33942 / OCh 114) (Erythrobacter sp. (strain OCh 114)).